A 129-amino-acid polypeptide reads, in one-letter code: Small ribosomal subunit protein uS11 (129 aa).

It belongs to the universal ribosomal protein uS11 family. Part of the 30S ribosomal subunit. Interacts with proteins S7 and S18. Binds to IF-3.

Located on the platform of the 30S subunit, it bridges several disparate RNA helices of the 16S rRNA. Forms part of the Shine-Dalgarno cleft in the 70S ribosome. This is Small ribosomal subunit protein uS11 from Colwellia psychrerythraea (strain 34H / ATCC BAA-681) (Vibrio psychroerythus).